The sequence spans 418 residues: Tyrosine--tRNA ligase 1 (418 aa).

Y34 provides a ligand contact to L-tyrosine. Residues 39–48 (PTGDSMHIGH) carry the 'HIGH' region motif. Residues Y166 and Q170 each contribute to the L-tyrosine site. The 'KMSKS' region motif lies at 228 to 232 (KFGKT). K231 is an ATP binding site. Positions 350–416 (KNIVDWLVDT…GKKNYFLAKV (67 aa)) constitute an S4 RNA-binding domain.

It belongs to the class-I aminoacyl-tRNA synthetase family. TyrS type 1 subfamily. As to quaternary structure, homodimer.

It is found in the cytoplasm. The catalysed reaction is tRNA(Tyr) + L-tyrosine + ATP = L-tyrosyl-tRNA(Tyr) + AMP + diphosphate + H(+). In terms of biological role, catalyzes the attachment of tyrosine to tRNA(Tyr) in a two-step reaction: tyrosine is first activated by ATP to form Tyr-AMP and then transferred to the acceptor end of tRNA(Tyr). In Enterococcus faecalis (strain ATCC 700802 / V583), this protein is Tyrosine--tRNA ligase 1.